The following is a 59-amino-acid chain: Protein HOR7 (59 aa).

An N-terminal signal peptide occupies residues Met-1–Ala-19.

To yeast DDR2.

The protein is Protein HOR7 (HOR7) of Saccharomyces cerevisiae (strain ATCC 204508 / S288c) (Baker's yeast).